Consider the following 854-residue polypeptide: Protein unc-33 (854 aa).

Disordered regions lie at residues 57-114 (ETVS…IPAP), 130-327 (ELFG…DGNG), and 794-854 (VERV…TGFW). 2 stretches are compositionally biased toward polar residues: residues 58–68 (TVSNKSRSSEG) and 75–97 (RPNS…TSAR). Over residues 193 to 202 (KVLRGEKSTP) the composition is skewed to basic and acidic residues. Residues 240–257 (VDDEEEPEAEAQEMEEPQ) show a composition bias toward acidic residues. A compositionally biased stretch (basic and acidic residues) spans 279-298 (HPSEDGDSTRNGETPTDRRN). Residues 802–811 (SSQQQKPQQN) are compositionally biased toward polar residues. A compositionally biased stretch (basic and acidic residues) spans 816–827 (NSGDFDRNRTKV).

The protein belongs to the metallo-dependent hydrolases superfamily. Hydantoinase/dihydropyrimidinase family. In terms of assembly, isoform a: Probable monomer. Isoform b: Probable homodimer. Isoform c: Probable homodimer. Probable heterodimer composed of isoform b and isoform c. Interacts with unc-14 and kinesin-1 motor complex light chain klc-1; both interactions regulate unc-33 neurite localization. Interacts with fln-1 (via calponin-homology (CH) domains and filamin repeat 18-19). Isoform c: Interacts with vab-8 isoform a. Expressed in ventral cord and nerve ring (at protein level). Isoform a: Expressed in nerve ring (at protein level). Expressed in the nervous system, two amphid socket cells and weakly in non-neuronal pharyngeal cells.

The protein localises to the cell projection. Its subcellular location is the axon. It localises to the dendrite. In terms of biological role, during neurogenesis, plays an essential role in axonal guidance and outgrowth by regulating the polarization of both microtubule and actin cytoskeletons. Establishes the asymmetry of axonal and dendrite microtubules and the polarized sorting of neuronal proteins. This is achieved in part by regulating the localization of kinesin-like protein unc-104. In neurons without a distal microtubule-organizing center (MTOC), also controls the organization of microtubules in dendrites. During the dorso-ventral axonal guidance and outgrowth of VD neurons, required downstream of Rac GTPases ced-10 and mig-2 to inhibit growth cone filopodial protrusion mediated by the unc-6/netrin receptor unc-40-unc-5. Specifically, regulates growth cone filopodial protrusion polarity, and thus migration, by promoting F-actin polarization and by restricting plus-end microtubule accumulation in the growth cone. Probably downstream of mab-20/Sema2a and mab-20 receptor plx-2, regulates the guidance of DD/VD neuron axons by modulating fln-1 interaction with F-actin which results in the remodeling of the actin cytoskeleton. In hermaphrodites, involved in sex myoblast (SM) migration by regulating the gonad-dependent repulsion of SMs. In neurons, required for the polarized sorting of axonal proteins. In PLM neuron, regulates innexin unc-9 gap junction turnover by suppressing unc-9 transport out of gap junctions. Plays a role in locomotion and egg-laying. Functionally, in PLM neuron, regulates innexin unc-9 gap junction turnover by suppressing unc-9 transport out of gap junctions. The polypeptide is Protein unc-33 (Caenorhabditis elegans).